The chain runs to 254 residues: Sulfoacetaldehyde reductase (254 aa).

NADP(+) is bound at residue 8 to 32 (FITGATSGFGEAAAQVFADAGWSLV). A substrate-binding site is contributed by serine 141. The active-site Proton acceptor is tyrosine 154.

It belongs to the short-chain dehydrogenases/reductases (SDR) family. In terms of assembly, homodimer and heterotetramer.

It carries out the reaction 2-hydroxyethane-1-sulfonate + NADP(+) = sulfoacetaldehyde + NADPH + H(+). The protein operates within organosulfur degradation. Catalyzes the formation of isethionate from 2-sulfoacetaldehyde in the deaminative pathway of taurine. The enzyme is specific for NADPH; NADH is not a substrate. This is Sulfoacetaldehyde reductase (isfD) from Klebsiella oxytoca.